We begin with the raw amino-acid sequence, 104 residues long: NADH-quinone oxidoreductase subunit K (104 aa).

3 consecutive transmembrane segments (helical) span residues 7-27, 31-51, and 63-83; these read PDMA…GVLV, LLFM…AFVA, and VMFL…LAIL.

Belongs to the complex I subunit 4L family. NDH-1 is composed of 14 different subunits. Subunits NuoA, H, J, K, L, M, N constitute the membrane sector of the complex.

The protein localises to the cell inner membrane. It carries out the reaction a quinone + NADH + 5 H(+)(in) = a quinol + NAD(+) + 4 H(+)(out). Functionally, NDH-1 shuttles electrons from NADH, via FMN and iron-sulfur (Fe-S) centers, to quinones in the respiratory chain. The immediate electron acceptor for the enzyme in this species is believed to be ubiquinone. Couples the redox reaction to proton translocation (for every two electrons transferred, four hydrogen ions are translocated across the cytoplasmic membrane), and thus conserves the redox energy in a proton gradient. The chain is NADH-quinone oxidoreductase subunit K from Gluconacetobacter diazotrophicus (strain ATCC 49037 / DSM 5601 / CCUG 37298 / CIP 103539 / LMG 7603 / PAl5).